We begin with the raw amino-acid sequence, 1616 residues long: Vitellogenin-1 (1616 aa).

An N-terminal signal peptide occupies residues 1-19; the sequence is MRSIIIASIVALAIAFSPA. A Vitellogenin domain is found at 24–689; it reads FEPKIDYHYK…EKNSFLLKDL (666 aa). N1270 carries an N-linked (GlcNAc...) asparagine glycan. The VWFD domain occupies 1310-1479; that stretch reads SVCKVQKNQI…SYLLKNEECE (170 aa). Intrachain disulfides connect C1312–C1442 and C1334–C1478. The span at 1505–1514 shows a compositional bias: acidic residues; sequence SFEETYDYEQ. The disordered stretch occupies residues 1505 to 1531; sequence SFEETYDYEQENTNKKQKNQRSQKKSD.

In terms of tissue distribution, expressed in the intestine of adult hermaphrodites.

Its subcellular location is the secreted. Its function is as follows. Precursor of the egg-yolk proteins that are sources of nutrients during embryonic development. Together with other vitellogenins, may play a role in modulating life-span, acting via induction of autophagy and lysosomal lipolysis. In Caenorhabditis elegans, this protein is Vitellogenin-1 (vit-1).